We begin with the raw amino-acid sequence, 157 residues long: GDVDVLKSLSADQKAAIKSSWAAFAADITGNGSNVLVQFFKDYPGDQSYFKKFDGKKPDELKGDAQLATHASQVFGSLNNMIDSMDDPDKMVGLLCKNASDHIPRGVRQQQYKELFSTLMNYMQSLPGANVAGDTKAAWDKALNAMANIIDAEQKRL.

Gly1 carries the post-translational modification N-acetylglycine. The 148-residue stretch at 8 to 155 (SLSADQKAAI…MANIIDAEQK (148 aa)) folds into the Globin domain. Heme b-binding residues include His70 and His102.

This sequence belongs to the globin family. Monomer.

The chain is Globin from Nerita albicilla (Ox-palate nerite).